Consider the following 1145-residue polypeptide: Structure-specific endonuclease subunit SLX4 (1145 aa).

The disordered stretch occupies residues 48-108 (ADIPVQPDPP…GKSKQQPSIS (61 aa)). The stretch at 321–372 (ERETQKCRQLRQQHELVYAELERYYGDPQKLEEEVMQELDELEKLVADNMIE) forms a coiled coil. Over residues 382 to 393 (EAESSSTGSSPS) the composition is skewed to low complexity. Disordered regions lie at residues 382-442 (EAES…EDEP), 613-634 (QSSHQLGILTTPNDTEHSSSFS), and 666-689 (SAEKRVSPAASPYKQSDASVDLTQ). Basic and acidic residues predominate over residues 395 to 410 (EPPDKRPKMTMEDKEN). 3 stretches are compositionally biased toward polar residues: residues 411–430 (LQPTTSKASLTVPAQSTRCT), 613–633 (QSSHQLGILTTPNDTEHSSSF), and 678–689 (YKQSDASVDLTQ).

The protein belongs to the SLX4 family. Forms a heterodimer with SLX1. Interacts with mei-9; catalytic subunit of the MEI-9-ERCC1 endonuclease.

It localises to the nucleus. Its function is as follows. Regulatory subunit that interacts with and increases the activity of different structure-specific endonucleases. Has several distinct roles in protecting genome stability by resolving diverse forms of deleterious DNA structures originating from replication and recombination intermediates and from DNA damage. Component of the SLX1-SLX4 structure-specific endonuclease that resolves DNA secondary structures generated during DNA repair and recombination. Has endonuclease activity towards branched DNA substrates, introducing single-strand cuts in duplex DNA close to junctions with ss-DNA. Interacts with the structure-specific MEI-9-ERCC1 endonuclease to generate meiotic crossovers. The chain is Structure-specific endonuclease subunit SLX4 (mus312) from Drosophila melanogaster (Fruit fly).